Reading from the N-terminus, the 199-residue chain is Protein-methionine-sulfoxide reductase heme-binding subunit MsrQ (199 aa).

The next 4 helical transmembrane spans lie at 8–28 (IIWL…WLFW), 82–102 (LWCF…ELGI), 116–136 (PYLT…LTST), and 153–173 (VVYL…KVLS).

Belongs to the MsrQ family. As to quaternary structure, heterodimer of a catalytic subunit (MsrP) and a heme-binding subunit (MsrQ). It depends on FMN as a cofactor. The cofactor is heme b.

It localises to the cell inner membrane. Functionally, part of the MsrPQ system that repairs oxidized periplasmic proteins containing methionine sulfoxide residues (Met-O), using respiratory chain electrons. Thus protects these proteins from oxidative-stress damage caused by reactive species of oxygen and chlorine generated by the host defense mechanisms. MsrPQ is essential for the maintenance of envelope integrity under bleach stress, rescuing a wide series of structurally unrelated periplasmic proteins from methionine oxidation, including the primary periplasmic chaperone SurA and the lipoprotein Pal. MsrQ provides electrons for reduction to the reductase catalytic subunit MsrP, using the quinone pool of the respiratory chain. The protein is Protein-methionine-sulfoxide reductase heme-binding subunit MsrQ of Salmonella arizonae (strain ATCC BAA-731 / CDC346-86 / RSK2980).